The primary structure comprises 309 residues: Potassium channel subfamily K member 16 (309 aa).

Residues 1–13 (MPSAGLCSCWGGR) lie on the Cytoplasmic side of the membrane. A helical transmembrane segment spans residues 14-34 (VLPLLLAYVCYLLLGATIFQL). The pore-forming intramembrane region spans 98-116 (SFFFAGTVVTTIGYGNLAP). Positions 108, 109, 110, and 111 each coordinate K(+). Residues 108–113 (TIGYGN) are selectivity filter 1. The helical transmembrane segment at 120-140 (AGQVFCVFYALLGIPLNVIFL) threads the bilayer. Over 141 to 165 (NHLGTGLRAHLAAIERWEDRPRRSQ) the chain is Cytoplasmic. Residues 166–186 (VLQVLGLALFLTLGTLVILIF) traverse the membrane as a helical segment. The segment at residues 202–221 (GFYFAFITLSTIGFGDYVVG) is an intramembrane region (pore-forming). 4 residues coordinate K(+): T212, I213, G214, and F215. Residues 212 to 217 (TIGFGD) are selectivity filter 2. The helical transmembrane segment at 238–258 (IWILLGLAWLALILPLGPLLL) threads the bilayer. Residues 259-309 (HRCCQLWLLSLRQGCGAKAAPGRRPRRGSTAARGVQVTPQDFPISKKGLGS) lie on the Cytoplasmic side of the membrane.

It belongs to the two pore domain potassium channel (TC 1.A.1.8) family. Homodimer; disulfide-linked. Heterodimer with KCNK17 and KCNK5. In terms of tissue distribution, highly expressed in pancreas, in both endocrine (alpha, beta, gamma, delta, and epsilon) and exocrine (acinar and ductal) cells. Expressed in pacreatic beta-cells (at protein level). Expressed in pacreatic delta-cells (at protein level). Not detectable in the other tissues tested.

The protein resides in the endoplasmic reticulum membrane. It is found in the cell membrane. Its subcellular location is the mitochondrion inner membrane. The enzyme catalyses K(+)(in) = K(+)(out). It carries out the reaction Rb(+)(in) = Rb(+)(out). The catalysed reaction is Cs(+)(in) = Cs(+)(out). Its activity is regulated as follows. The channel conductance is stimulated by extracellular alkaline pH. Inhibited by Ba(2+) ions, quinine, quinidine, chloroform and halothane. Its function is as follows. K(+) channel that conducts voltage-dependent outward rectifying currents upon membrane depolarization. Voltage sensing is coupled to K(+) electrochemical gradient in an 'ion flux gating' mode where outward but not inward ion flow opens the gate. Homo- and heterodimerizes to form functional channels with distinct regulatory and gating properties. In pancreatic islets, conducts K(+) countercurrents for Ca(2+) release from the endoplasmic reticulum (ER) and regulates the frequency and duration of cytosolic Ca(2+) oscillations coupled to secretion of pancreatic hormones. In pancreatic beta cells, drives ER Ca(2+) efflux, which in turn activates Ca(2+)-dependent plasma membrane K(+) slow currents and cytosolic Ca(2+) influx, overall contributing to synchronous cytosolic Ca(2+) oscillations. Limits glucose-induced cytosolic Ca(2+) oscillations coupled to second-phase INS secretion. Contributes to beta cell adaptation to acute inflammation by maintaining normal cytosolic Ca(2+) levels and INS secretion. May regulate beta cell mitochondrial Ca(2+) levels either indirectly via ER Ca(2+) efflux or directly by hyperpolarizing the mitochondrial membrane potential. Limits mitochondrial Ca(2+) oscillations and ATP production involved in glucose homeostasis upon metabolic stress. In pancreatic delta cells, limits Ca(2+)-induced Ca(2+)-release involved in somatostatin secretion and modulates islet paracrine signaling involved in glucagon secretion. Permeable to other monovalent cations such as Rb(+) and Cs(+). The polypeptide is Potassium channel subfamily K member 16 (Homo sapiens (Human)).